Consider the following 535-residue polypeptide: GMP synthase [glutamine-hydrolyzing] (535 aa).

The region spanning 20–210 is the Glutamine amidotransferase type-1 domain; the sequence is PVLVVDFGAQ…LHRCAALPND (191 aa). Cysteine 97 functions as the Nucleophile in the catalytic mechanism. Active-site residues include histidine 184 and glutamate 186. The GMPS ATP-PPase domain occupies 211–409; that stretch reads WDASSIIEDQ…LGLPDEIVWR (199 aa). 238-244 provides a ligand contact to ATP; it reads SGGVDSA.

Homodimer.

The enzyme catalyses XMP + L-glutamine + ATP + H2O = GMP + L-glutamate + AMP + diphosphate + 2 H(+). The protein operates within purine metabolism; GMP biosynthesis; GMP from XMP (L-Gln route): step 1/1. In terms of biological role, catalyzes the synthesis of GMP from XMP. The protein is GMP synthase [glutamine-hydrolyzing] of Bifidobacterium longum (strain NCC 2705).